A 268-amino-acid chain; its full sequence is Cyclohexadienyl dehydratase (268 aa).

The signal sequence occupies residues 1–25 (MPKSFRHLVQALACLALLASASLQA).

It belongs to the bacterial solute-binding protein 3 family. As to quaternary structure, homodimer.

It is found in the periplasm. The catalysed reaction is prephenate + H(+) = 3-phenylpyruvate + CO2 + H2O. The enzyme catalyses L-arogenate + H(+) = L-phenylalanine + CO2 + H2O. The protein operates within amino-acid biosynthesis; L-phenylalanine biosynthesis; L-phenylalanine from L-arogenate: step 1/1. It participates in amino-acid biosynthesis; L-phenylalanine biosynthesis; phenylpyruvate from prephenate: step 1/1. In terms of biological role, forms alternative pathway for phenylalanine biosynthesis. Can catalyze two reactions: prephenate dehydratase and arogenate dehydratase. May have a role in chemotaxis or transport. The protein is Cyclohexadienyl dehydratase (pheC) of Pseudomonas aeruginosa (strain ATCC 15692 / DSM 22644 / CIP 104116 / JCM 14847 / LMG 12228 / 1C / PRS 101 / PAO1).